The primary structure comprises 437 residues: Leucine-rich repeat flightless-interacting protein 2 (437 aa).

Residue Ser-18 is modified to Phosphoserine. Residues 22 to 49 (EALSNIAREAEARLAAKRAARAEARDIR) adopt a coiled-coil conformation. Positions 33 to 62 (ARLAAKRAARAEARDIRMRELERQQRESSS) are enriched in basic and acidic residues. Residues 33–152 (ARLAAKRAAR…DTSLSELRES (120 aa)) are disordered. The segment covering 63 to 74 (KDITGTHWSRAS) has biased composition (polar residues). A compositionally biased stretch (basic and acidic residues) spans 77–105 (KRRDMMYDSIKDRSSRVSSLLDEKSDKQY). Residues 110–139 (TRPSSRNSASATTPLSGNSSRRGSGDTSSL) are compositionally biased toward polar residues. Phosphoserine occurs at positions 114, 117, 125, 129, and 133. Thr-136 carries the phosphothreonine modification. Residues Ser-137 and Ser-138 each carry the phosphoserine modification. Coiled coils occupy residues 143–239 (DTSL…LIEK) and 282–430 (LDVR…KANR).

Belongs to the LRRFIP family. As to quaternary structure, interacts with DVL3 and FLII. Weakly interacts with MYD88 in resting cells. Following LPS-stimulation, the interaction with MYD88 is rapidly enhanced; the complex gradually dissociates to basal levels after 6 hours of stimulation. Interaction with MYD88 is regulated by LPS-induced phosphorylation. In the presence of LPS, competes with FLII for MYD88-binding.

In terms of biological role, may function as activator of the canonical Wnt signaling pathway, in association with DVL3, upstream of CTNNB1/beta-catenin. Positively regulates Toll-like receptor (TLR) signaling in response to agonist probably by competing with the negative FLII regulator for MYD88-binding. This chain is Leucine-rich repeat flightless-interacting protein 2 (Lrrfip2), found in Rattus norvegicus (Rat).